Consider the following 276-residue polypeptide: Pantothenate synthetase (276 aa).

27–34 (MGALHRGH) contacts ATP. His34 (proton donor) is an active-site residue. Gln58 lines the (R)-pantoate pocket. Gln58 is a beta-alanine binding site. 147 to 150 (GKKD) contacts ATP. Gln153 is a binding site for (R)-pantoate. ATP-binding positions include Ala176 and 184 to 187 (LSSR).

This sequence belongs to the pantothenate synthetase family. As to quaternary structure, homodimer.

Its subcellular location is the cytoplasm. It carries out the reaction (R)-pantoate + beta-alanine + ATP = (R)-pantothenate + AMP + diphosphate + H(+). It functions in the pathway cofactor biosynthesis; (R)-pantothenate biosynthesis; (R)-pantothenate from (R)-pantoate and beta-alanine: step 1/1. Catalyzes the condensation of pantoate with beta-alanine in an ATP-dependent reaction via a pantoyl-adenylate intermediate. In Helicobacter pylori (strain P12), this protein is Pantothenate synthetase.